Reading from the N-terminus, the 417-residue chain is Histidine--tRNA ligase (417 aa).

Belongs to the class-II aminoacyl-tRNA synthetase family. As to quaternary structure, homodimer.

The protein localises to the cytoplasm. It catalyses the reaction tRNA(His) + L-histidine + ATP = L-histidyl-tRNA(His) + AMP + diphosphate + H(+). The protein is Histidine--tRNA ligase of Oleidesulfovibrio alaskensis (strain ATCC BAA-1058 / DSM 17464 / G20) (Desulfovibrio alaskensis).